The primary structure comprises 205 residues: N-(5'-phosphoribosyl)anthranilate isomerase (205 aa).

This sequence belongs to the TrpF family.

It catalyses the reaction N-(5-phospho-beta-D-ribosyl)anthranilate = 1-(2-carboxyphenylamino)-1-deoxy-D-ribulose 5-phosphate. The protein operates within amino-acid biosynthesis; L-tryptophan biosynthesis; L-tryptophan from chorismate: step 3/5. This chain is N-(5'-phosphoribosyl)anthranilate isomerase, found in Acidithiobacillus ferrooxidans (strain ATCC 23270 / DSM 14882 / CIP 104768 / NCIMB 8455) (Ferrobacillus ferrooxidans (strain ATCC 23270)).